A 230-amino-acid polypeptide reads, in one-letter code: MVNLEELSLKRNNMKRTETTFTDISGKRYQVANINEENSESNRIELNRTSGFVIDTKPDDLSHKIEIIIPQSILNNNNNNYESINLYIGSQDAAFNKLDLQLKNIKSILNVGIGINNLFTKENSDINDGFIINYCNVEIFDDVNFNIIEKFDKCFEFIDSNIGGVENNGILVHCNAGVSRSATILISYLMKKLKIPLSLSLEILKSSRPQCKPNQGFLKQLEIFEKELLF.

The region spanning 78 to 230 (NNNYESINLY…LEIFEKELLF (153 aa)) is the Tyrosine-protein phosphatase domain. Residue cysteine 174 is the Phosphocysteine intermediate of the active site.

This sequence belongs to the protein-tyrosine phosphatase family. Non-receptor class dual specificity subfamily.

The catalysed reaction is O-phospho-L-tyrosyl-[protein] + H2O = L-tyrosyl-[protein] + phosphate. It catalyses the reaction O-phospho-L-seryl-[protein] + H2O = L-seryl-[protein] + phosphate. It carries out the reaction O-phospho-L-threonyl-[protein] + H2O = L-threonyl-[protein] + phosphate. Has a dual specificity toward Ser/Thr and Tyr-containing proteins. The chain is Probable dual specificity protein phosphatase DDB_G0283417 from Dictyostelium discoideum (Social amoeba).